Consider the following 383-residue polypeptide: MREHCVTSESVTEGHPDKVCDQISDGILDACVAQDPASRVAVETLVSGNIAVIAGEITTTAQIDAERTARAVIKAIGYDDPALGFDSDSCFILTNLRTQSPDINLGVSRGDELGAGDQGVFYGYACDETANLMPIPIALAHTLSLRLTMMRRDGTLPWLRPDGKVQVTMRYGRDGRPCGLDSVVVSAQHDEAVDRDTLVRGLVEGVIYPELHDWLQPGTRVLINPTGRFVVGGPAGDTGVTGRKLMVDTYGGCAQHGGGAFSGKDATKVDRTAAYMARYAAKNVVAAGLAGRCQLALAYAIGQIDPEMISVETFGTETVDGDRICAAVREVFPWTVSGMIAALELRQPRFRKTAAYGHFGREDQGFQWEKTDRSGELLALCTR.

Histidine 15 provides a ligand contact to ATP. Residue aspartate 17 participates in Mg(2+) binding. K(+) is bound at residue glutamate 43. L-methionine contacts are provided by glutamate 56 and glutamine 99. Residues 99–109 form a flexible loop region; it reads QSPDINLGVSR. Residues 162-164, 228-229, aspartate 237, 243-244, alanine 260, and lysine 264 contribute to the ATP site; these read DGK, RF, and RK. Position 237 (aspartate 237) interacts with L-methionine. Lysine 268 contacts L-methionine.

Belongs to the AdoMet synthase family. Homotetramer; dimer of dimers. The cofactor is Mg(2+). It depends on K(+) as a cofactor.

The protein resides in the cytoplasm. It catalyses the reaction L-methionine + ATP + H2O = S-adenosyl-L-methionine + phosphate + diphosphate. Its pathway is amino-acid biosynthesis; S-adenosyl-L-methionine biosynthesis; S-adenosyl-L-methionine from L-methionine: step 1/1. Catalyzes the formation of S-adenosylmethionine (AdoMet) from methionine and ATP. The overall synthetic reaction is composed of two sequential steps, AdoMet formation and the subsequent tripolyphosphate hydrolysis which occurs prior to release of AdoMet from the enzyme. In Rhodopseudomonas palustris (strain BisB18), this protein is S-adenosylmethionine synthase 1.